Consider the following 319-residue polypeptide: Acetyl-coenzyme A carboxylase carboxyl transferase subunit alpha (319 aa).

In terms of domain architecture, CoA carboxyltransferase C-terminal spans 39–293; the sequence is KLEQKAAQLL…GDAIAEELKG (255 aa).

The protein belongs to the AccA family. Acetyl-CoA carboxylase is a heterohexamer composed of biotin carboxyl carrier protein (AccB), biotin carboxylase (AccC) and two subunits each of ACCase subunit alpha (AccA) and ACCase subunit beta (AccD).

The protein resides in the cytoplasm. The enzyme catalyses N(6)-carboxybiotinyl-L-lysyl-[protein] + acetyl-CoA = N(6)-biotinyl-L-lysyl-[protein] + malonyl-CoA. It functions in the pathway lipid metabolism; malonyl-CoA biosynthesis; malonyl-CoA from acetyl-CoA: step 1/1. Its function is as follows. Component of the acetyl coenzyme A carboxylase (ACC) complex. First, biotin carboxylase catalyzes the carboxylation of biotin on its carrier protein (BCCP) and then the CO(2) group is transferred by the carboxyltransferase to acetyl-CoA to form malonyl-CoA. This is Acetyl-coenzyme A carboxylase carboxyl transferase subunit alpha from Parvibaculum lavamentivorans (strain DS-1 / DSM 13023 / NCIMB 13966).